Reading from the N-terminus, the 489-residue chain is Ent-kaurenoic acid oxidase 2 (489 aa).

Residues 5 to 25 (GLILMWFPLIILGLFVLKWVL) form a helical membrane-spanning segment. Residue C436 coordinates heme.

The protein belongs to the cytochrome P450 family. It depends on heme as a cofactor. Widely expressed. Highly expressed in influorescence stem, influorescence, and silique tissue. Weakly expressed in cauline and rosette leaves. Expressed at a weaker level in stem and influorescence than AtKAO1/CYP88A3.

It localises to the endoplasmic reticulum membrane. The catalysed reaction is ent-kaur-16-en-19-oate + 3 reduced [NADPH--hemoprotein reductase] + 3 O2 = gibberellin A12 + 3 oxidized [NADPH--hemoprotein reductase] + 4 H2O + 4 H(+). It catalyses the reaction ent-kaur-16-en-19-oate + reduced [NADPH--hemoprotein reductase] + O2 = ent-7alpha-hydroxykaur-16-en-19-oate + oxidized [NADPH--hemoprotein reductase] + H2O + H(+). The enzyme catalyses ent-7alpha-hydroxykaur-16-en-19-oate + reduced [NADPH--hemoprotein reductase] + O2 = gibberellin A12 aldehyde + oxidized [NADPH--hemoprotein reductase] + 2 H2O + H(+). It carries out the reaction gibberellin A12 aldehyde + reduced [NADPH--hemoprotein reductase] + O2 = gibberellin A12 + oxidized [NADPH--hemoprotein reductase] + H2O + 2 H(+). The protein operates within plant hormone biosynthesis; gibberellin biosynthesis. Functionally, catalyzes three successive oxidations of ent-kaurenoic acid giving gibberellin 12 (GA12), a key step in gibberellins (GAs) biosynthesis. GAs, which are involved many processes, including stem elongation, play a central role in plant development. The protein is Ent-kaurenoic acid oxidase 2 of Arabidopsis thaliana (Mouse-ear cress).